A 572-amino-acid chain; its full sequence is Mitochondrial distribution and morphology protein 34 (572 aa).

Positions 1 to 195 constitute an SMP-LTD domain; that stretch reads MAFNFNWSPL…LPAIIHRLSL (195 aa). Disordered stretches follow at residues 208–236, 296–405, 455–518, and 551–572; these read LQTQTESANGEGPGQDPLASPPQDPVDAL, PSDQ…CSAP, RDTA…PFIN, and NACGPFWDRHSQEESPPPAYGH. A compositionally biased stretch (polar residues) spans 296–347; it reads PSDQTDASGGVTSPFSPVLSRTQSQVGSMSSFPDSASMVSNQSRSSTPSHTF. Residues 358–370 are compositionally biased toward basic residues; that stretch reads RHSKAHARKRKKR. The segment covering 371 to 381 has biased composition (basic and acidic residues); it reads VVDLRRPKTTD. 2 stretches are compositionally biased toward polar residues: residues 387–401 and 498–511; these read SDESAFTESTSTPSI and ATGSSAGSSRQLPS.

The protein belongs to the MDM34 family. Component of the ER-mitochondria encounter structure (ERMES) or MDM complex, composed of mmm1, mdm10, mdm12 and mdm34.

The protein resides in the mitochondrion outer membrane. In terms of biological role, component of the ERMES/MDM complex, which serves as a molecular tether to connect the endoplasmic reticulum (ER) and mitochondria. Components of this complex are involved in the control of mitochondrial shape and protein biogenesis, and function in nonvesicular lipid trafficking between the ER and mitochondria. Mdm34 is required for the interaction of the ER-resident membrane protein mmm1 and the outer mitochondrial membrane-resident beta-barrel protein mdm10. This is Mitochondrial distribution and morphology protein 34 from Neosartorya fischeri (strain ATCC 1020 / DSM 3700 / CBS 544.65 / FGSC A1164 / JCM 1740 / NRRL 181 / WB 181) (Aspergillus fischerianus).